A 90-amino-acid polypeptide reads, in one-letter code: Small ribosomal subunit protein uS15 (90 aa).

The protein belongs to the universal ribosomal protein uS15 family. As to quaternary structure, part of the 30S ribosomal subunit. Forms a bridge to the 50S subunit in the 70S ribosome, contacting the 23S rRNA.

In terms of biological role, one of the primary rRNA binding proteins, it binds directly to 16S rRNA where it helps nucleate assembly of the platform of the 30S subunit by binding and bridging several RNA helices of the 16S rRNA. Functionally, forms an intersubunit bridge (bridge B4) with the 23S rRNA of the 50S subunit in the ribosome. This Wolinella succinogenes (strain ATCC 29543 / DSM 1740 / CCUG 13145 / JCM 31913 / LMG 7466 / NCTC 11488 / FDC 602W) (Vibrio succinogenes) protein is Small ribosomal subunit protein uS15.